The primary structure comprises 158 residues: Immunoglobulin J chain (158 aa).

The signal sequence occupies residues M1–A22. 3 disulfides stabilise this stretch: C36-C122, C95-C115, and C130-C155. N72 is a glycosylation site (N-linked (GlcNAc...) (complex) asparagine).

Part of the secretory IgA (sIgA) complex that consists of two, four or five IgA monomers, and two additional non-Ig polypeptides, namely the JCHAIN and the secretory component (the proteolytic product of PIGR). Part of the secretory IgM (sIgM) complex that consist of five IgM monomers, and two additional non-Ig polypeptides, namely the JCHAIN and the secretory component (the proteolytic product of PIGR). JCHAIN-containing IgM interacts (via CH4 domain) with FCRM (via Ig-like domain). In terms of processing, N-glycosylated. N-glycans attached to Asn-72 varies from truncated, differentially fucosylated to sialylated (NeuGc) complex types: Man3GlcNAc2; GlcNAc2Man3GlcNAc2(Fuc); Gal1GlcNAc1Man3GlcNAc2; GlcNAc2Man3GlcNAc2; GlcNAc1Man3GlcNAc2; GlcNAc1Man2GlcNAc2 and NeuGc1Gal1GlcNAc2Man3GlcNAc2.

The protein resides in the secreted. Functionally, serves to link two monomer units of either IgM or IgA. In the case of IgM, the J chain-joined dimer is a nucleating unit for the IgM pentamer, and in the case of IgA it induces dimers and/or larger polymers. It also helps to bind these immunoglobulins to secretory component. The protein is Immunoglobulin J chain (JCHAIN) of Equus asinus (Donkey).